The primary structure comprises 357 residues: 3-dehydroquinate synthase (357 aa).

Residues 69-74 (DGEKNK), 103-107 (GVIGD), 127-128 (TT), K140, and K149 each bind NAD(+). Zn(2+) is bound by residues E182, H245, and H262.

Belongs to the sugar phosphate cyclases superfamily. Dehydroquinate synthase family. Co(2+) serves as cofactor. Zn(2+) is required as a cofactor. It depends on NAD(+) as a cofactor.

It localises to the cytoplasm. The catalysed reaction is 7-phospho-2-dehydro-3-deoxy-D-arabino-heptonate = 3-dehydroquinate + phosphate. Its pathway is metabolic intermediate biosynthesis; chorismate biosynthesis; chorismate from D-erythrose 4-phosphate and phosphoenolpyruvate: step 2/7. Catalyzes the conversion of 3-deoxy-D-arabino-heptulosonate 7-phosphate (DAHP) to dehydroquinate (DHQ). This is 3-dehydroquinate synthase from Shewanella denitrificans (strain OS217 / ATCC BAA-1090 / DSM 15013).